A 124-amino-acid polypeptide reads, in one-letter code: Small ribosomal subunit protein uS12 (124 aa).

D89 carries the 3-methylthioaspartic acid modification.

Belongs to the universal ribosomal protein uS12 family. Part of the 30S ribosomal subunit. Contacts proteins S8 and S17. May interact with IF1 in the 30S initiation complex.

Functionally, with S4 and S5 plays an important role in translational accuracy. Its function is as follows. Interacts with and stabilizes bases of the 16S rRNA that are involved in tRNA selection in the A site and with the mRNA backbone. Located at the interface of the 30S and 50S subunits, it traverses the body of the 30S subunit contacting proteins on the other side and probably holding the rRNA structure together. The combined cluster of proteins S8, S12 and S17 appears to hold together the shoulder and platform of the 30S subunit. The protein is Small ribosomal subunit protein uS12 of Hamiltonella defensa subsp. Acyrthosiphon pisum (strain 5AT).